Consider the following 1225-residue polypeptide: DNA-directed RNA polymerase subunit beta' (1225 aa).

The Zn(2+) site is built by Cys60, Cys62, Cys75, and Cys78. Residues Asp450, Asp452, and Asp454 each coordinate Mg(2+). Zn(2+) is bound by residues Cys818, Cys892, Cys899, and Cys902.

This sequence belongs to the RNA polymerase beta' chain family. As to quaternary structure, the RNAP catalytic core consists of 2 alpha, 1 beta, 1 beta' and 1 omega subunit. When a sigma factor is associated with the core the holoenzyme is formed, which can initiate transcription. Mg(2+) serves as cofactor. The cofactor is Zn(2+).

The enzyme catalyses RNA(n) + a ribonucleoside 5'-triphosphate = RNA(n+1) + diphosphate. Functionally, DNA-dependent RNA polymerase catalyzes the transcription of DNA into RNA using the four ribonucleoside triphosphates as substrates. The sequence is that of DNA-directed RNA polymerase subunit beta' from Streptococcus pneumoniae (strain ATCC BAA-255 / R6).